A 444-amino-acid chain; its full sequence is MKLRSKAAALLLLALAVLLLALLSLRARRDPEPPGFPARPEAAPQRRHAPVPTLPPEPRAFPGAAGRRSPRRQPPRLRPRAGRPRAASREKLARRPGETRSLHSVPPELWIHLAVVACGNRLEETLVMLKSAVLFSHRKMRFHIFTEDALKPEFDKQLRQWPDSYTKKFEHRLYPITFSVGNPQEWKKLFKPCAAQRLFLPAILKDVDSLLYVDTDVLFLRPVDDIWKLLRQFNSTQLAAMAPEHEIPKIGWYSRFARHPFYGSAGVNSGVMLMNLTRIRNTQFKNSLIPAGLAWEEMLLPLYQKYKSAITWGDQDLLNIIFYYNPECLYVFPCQWNYRPDHCMYGSNCKEAEREGVSVLHGNRGVYHDDKQPTFRALYEAIRDFPFQDNLFQSMYYPLQLKFLETVHTLCGRIPQVFLKQIEKTMRRAYEKHVIIHMGPNPMS.

The Cytoplasmic portion of the chain corresponds to 1-4 (MKLR). The helical; Signal-anchor for type II membrane protein transmembrane segment at 5-25 (SKAAALLLLALAVLLLALLSL) threads the bilayer. At 26–444 (RARRDPEPPG…IIHMGPNPMS (419 aa)) the chain is on the lumenal side. Residues 31-101 (PEPPGFPARP…LARRPGETRS (71 aa)) form a disordered region. Over residues 68 to 83 (RSPRRQPPRLRPRAGR) the composition is skewed to basic residues. Positions 87–101 (ASREKLARRPGETRS) are enriched in basic and acidic residues. Asn-275 carries N-linked (GlcNAc...) asparagine glycosylation.

This sequence belongs to the glycosyltransferase 8 family.

It is found in the membrane. It catalyses the reaction 3-O-(beta-D-glucosyl)-L-seryl-[EGF-like domain protein] + UDP-alpha-D-xylose = 3-O-[alpha-D-xylosyl-(1-&gt;3)-beta-D-glucosyl]-L-seryl-[EGF-like domain protein] + UDP + H(+). Glycosyltransferase which elongates the O-linked glucose attached to EGF-like repeats in the extracellular domain of Notch proteins by catalyzing the addition of xylose. The chain is Glucoside xylosyltransferase 2 (Gxylt2) from Mus musculus (Mouse).